A 95-amino-acid polypeptide reads, in one-letter code: Large ribosomal subunit protein bL27 (95 aa).

The propeptide occupies M1–F6.

Belongs to the bacterial ribosomal protein bL27 family. In terms of processing, the N-terminus is cleaved by ribosomal processing cysteine protease Prp.

The sequence is that of Large ribosomal subunit protein bL27 from Symbiobacterium thermophilum (strain DSM 24528 / JCM 14929 / IAM 14863 / T).